Here is a 353-residue protein sequence, read N- to C-terminus: Photosystem II D2 protein (353 aa).

Position 2 is an N-acetylthreonine (T2). T2 bears the Phosphothreonine mark. A helical membrane pass occupies residues 41-61 (CAYFALGGWFTGTTFVTSWYT). A chlorophyll a-binding site is contributed by H118. A helical membrane pass occupies residues 125–141 (GFMLRQFELARSVQLRP). The pheophytin a site is built by Q130 and N143. A helical transmembrane segment spans residues 153-166 (VFVSVFLIYPLGQS). H198 is a chlorophyll a binding site. A helical membrane pass occupies residues 208–228 (AALLCAIHGATVENTLFEDGD). Positions 215 and 262 each coordinate a plastoquinone. H215 provides a ligand contact to Fe cation. H269 contacts Fe cation. The helical transmembrane segment at 279–295 (GLWMSALGVVGLALNLR) threads the bilayer.

Belongs to the reaction center PufL/M/PsbA/D family. In terms of assembly, PSII is composed of 1 copy each of membrane proteins PsbA, PsbB, PsbC, PsbD, PsbE, PsbF, PsbH, PsbI, PsbJ, PsbK, PsbL, PsbM, PsbT, PsbX, PsbY, PsbZ, Psb30/Ycf12, at least 3 peripheral proteins of the oxygen-evolving complex and a large number of cofactors. It forms dimeric complexes. The cofactor is The D1/D2 heterodimer binds P680, chlorophylls that are the primary electron donor of PSII, and subsequent electron acceptors. It shares a non-heme iron and each subunit binds pheophytin, quinone, additional chlorophylls, carotenoids and lipids. There is also a Cl(-1) ion associated with D1 and D2, which is required for oxygen evolution. The PSII complex binds additional chlorophylls, carotenoids and specific lipids..

It localises to the plastid. It is found in the chloroplast thylakoid membrane. It carries out the reaction 2 a plastoquinone + 4 hnu + 2 H2O = 2 a plastoquinol + O2. Photosystem II (PSII) is a light-driven water:plastoquinone oxidoreductase that uses light energy to abstract electrons from H(2)O, generating O(2) and a proton gradient subsequently used for ATP formation. It consists of a core antenna complex that captures photons, and an electron transfer chain that converts photonic excitation into a charge separation. The D1/D2 (PsbA/PsbD) reaction center heterodimer binds P680, the primary electron donor of PSII as well as several subsequent electron acceptors. D2 is needed for assembly of a stable PSII complex. The protein is Photosystem II D2 protein of Citrus sinensis (Sweet orange).